The sequence spans 211 residues: Shikimate kinase (211 aa).

The span at 1–13 shows a compositional bias: low complexity; that stretch reads MNASANLCAASAN. A disordered region spans residues 1-24; sequence MNASANLCAASANDPQPGDQEAAH. ATP is bound at residue 50–55; it reads GAGKTT. A Mg(2+)-binding site is contributed by threonine 54. Substrate contacts are provided by aspartate 72, arginine 96, and glycine 118. Arginine 156 contacts ATP. Residue arginine 175 participates in substrate binding.

This sequence belongs to the shikimate kinase family. In terms of assembly, monomer. It depends on Mg(2+) as a cofactor.

Its subcellular location is the cytoplasm. The enzyme catalyses shikimate + ATP = 3-phosphoshikimate + ADP + H(+). Its pathway is metabolic intermediate biosynthesis; chorismate biosynthesis; chorismate from D-erythrose 4-phosphate and phosphoenolpyruvate: step 5/7. Its function is as follows. Catalyzes the specific phosphorylation of the 3-hydroxyl group of shikimic acid using ATP as a cosubstrate. The polypeptide is Shikimate kinase (Bordetella parapertussis (strain 12822 / ATCC BAA-587 / NCTC 13253)).